Here is a 197-residue protein sequence, read N- to C-terminus: CASP-like protein 1B2 (197 aa).

Position 2 is an N-acetylalanine (alanine 2). The Cytoplasmic portion of the chain corresponds to 2-17 (AREKIVVAGGTTKSWK). A helical transmembrane segment spans residues 18–38 (LLLGLRIFAFMATLAAAIVMS). Residues 39–69 (LNKETKTLVVATIGTVPIKATLTAKFQHTPA) are Extracellular-facing. The helical transmembrane segment at 70–90 (FVFFVIANVMVSFHNLLMIVV) threads the bilayer. Over 91 to 106 (QIFSRKLEYKGLRLLS) the chain is Cytoplasmic. A helical membrane pass occupies residues 107 to 127 (IAILDMLNATLVSAAANAAVF). Over 128–156 (VAELGKNGNKHAKWNKVCDRFTTYCDHGA) the chain is Extracellular. A helical transmembrane segment spans residues 157–177 (GAIIAAFAGVILMLLVSAVSI). At 178-197 (SRLLINSKNFSTTATTTSVV) the chain is on the cytoplasmic side.

It belongs to the Casparian strip membrane proteins (CASP) family. In terms of assembly, homodimer and heterodimers.

The protein resides in the cell membrane. The polypeptide is CASP-like protein 1B2 (Arabidopsis thaliana (Mouse-ear cress)).